The sequence spans 412 residues: Gamma-glutamyl phosphate reductase (412 aa).

The protein belongs to the gamma-glutamyl phosphate reductase family.

It localises to the cytoplasm. The enzyme catalyses L-glutamate 5-semialdehyde + phosphate + NADP(+) = L-glutamyl 5-phosphate + NADPH + H(+). It participates in amino-acid biosynthesis; L-proline biosynthesis; L-glutamate 5-semialdehyde from L-glutamate: step 2/2. Functionally, catalyzes the NADPH-dependent reduction of L-glutamate 5-phosphate into L-glutamate 5-semialdehyde and phosphate. The product spontaneously undergoes cyclization to form 1-pyrroline-5-carboxylate. This Actinobacillus pleuropneumoniae serotype 7 (strain AP76) protein is Gamma-glutamyl phosphate reductase.